We begin with the raw amino-acid sequence, 193 residues long: Penicillin-binding protein activator LpoB (193 aa).

The N-terminal stretch at 1 to 16 (MKKMLFVVAAVFLLAG) is a signal peptide. C17 is lipidated: N-palmitoyl cysteine. C17 is lipidated: S-diacylglycerol cysteine. Positions 23–50 (QQPPAPVEPVTPTEPTEPPKPIEPPIEV) are disordered. Pro residues predominate over residues 37–46 (PTEPPKPIEP).

The protein belongs to the LpoB family. As to quaternary structure, interacts with PBP1b.

The protein resides in the cell outer membrane. Regulator of peptidoglycan synthesis that is essential for the function of penicillin-binding protein 1B (PBP1b). The sequence is that of Penicillin-binding protein activator LpoB from Proteus mirabilis (strain HI4320).